The following is a 164-amino-acid chain: Transcriptional regulator MraZ (164 aa).

SpoVT-AbrB domains are found at residues 7–63 (REQH…EPAV) and 92–135 (LDQL…NPDR).

It belongs to the MraZ family. Forms oligomers.

It is found in the cytoplasm. Its subcellular location is the nucleoid. This chain is Transcriptional regulator MraZ, found in Chlorobaculum parvum (strain DSM 263 / NCIMB 8327) (Chlorobium vibrioforme subsp. thiosulfatophilum).